Consider the following 88-residue polypeptide: Small ribosomal subunit protein bS20 (88 aa).

The segment at methionine 1–methionine 27 is disordered.

Belongs to the bacterial ribosomal protein bS20 family.

Its function is as follows. Binds directly to 16S ribosomal RNA. The sequence is that of Small ribosomal subunit protein bS20 from Chromohalobacter salexigens (strain ATCC BAA-138 / DSM 3043 / CIP 106854 / NCIMB 13768 / 1H11).